A 335-amino-acid chain; its full sequence is MAAPSGVHLLVRRGSHRIFSSPLNHIYLHKQSSSQQRRNFFFRRQRDISHSIVLPAAVSSAHPVPKHIKKPDYVTTGIVPDWGDSIEVKNEDQIQGLHQACQLARHVLLLAGKSLKVDMTTEEIDALVHREIISHNAYPSPLGYGGFPKSVCTSVNNVLCHGIPDSRPLQDGDIINIDVTVYYNGYHGDTSETFLVGNVDECGKKLVEVARRCRDEAIAACRAGAPFSVIGNTISHITHQNGFQVCPHFVGHGIGSYFHGHPEIWHHANDSDLPMEEGMAFTIEPIITEGSPEFKVLEDAWTVVSLDNQRSAQFEHTVLITSRGAQILTKLPHEA.

The transit peptide at 1-19 directs the protein to the mitochondrion; the sequence is MAAPSGVHLLVRRGSHRIF. Position 161 (His-161) interacts with substrate. A divalent metal cation is bound by residues Asp-178, Asp-189, and His-252. His-259 is a substrate binding site. A divalent metal cation is bound by residues Glu-284 and Glu-315.

This sequence belongs to the peptidase M24A family. Methionine aminopeptidase type 1 subfamily. The cofactor is Co(2+). Requires Zn(2+) as cofactor. It depends on Mn(2+) as a cofactor. Fe(2+) serves as cofactor. As to expression, overexpressed in colon cancer cell lines and colon tumors as compared to normal tissues (at protein level).

The protein resides in the mitochondrion. It carries out the reaction Release of N-terminal amino acids, preferentially methionine, from peptides and arylamides.. Functionally, removes the N-terminal methionine from nascent proteins. The N-terminal methionine is often cleaved when the second residue in the primary sequence is small and uncharged (Met-Ala-, Cys, Gly, Pro, Ser, Thr, or Val). Requires deformylation of the N(alpha)-formylated initiator methionine before it can be hydrolyzed. May play a role in colon tumorigenesis. The chain is Methionine aminopeptidase 1D, mitochondrial (METAP1D) from Homo sapiens (Human).